The chain runs to 183 residues: Peptide methionine sulfoxide reductase MsrA 1 (183 aa).

Residue Cys-12 is part of the active site.

The protein belongs to the MsrA Met sulfoxide reductase family.

The catalysed reaction is L-methionyl-[protein] + [thioredoxin]-disulfide + H2O = L-methionyl-(S)-S-oxide-[protein] + [thioredoxin]-dithiol. The enzyme catalyses [thioredoxin]-disulfide + L-methionine + H2O = L-methionine (S)-S-oxide + [thioredoxin]-dithiol. Functionally, has an important function as a repair enzyme for proteins that have been inactivated by oxidation. Catalyzes the reversible oxidation-reduction of methionine sulfoxide in proteins to methionine. The chain is Peptide methionine sulfoxide reductase MsrA 1 (msrA1) from Lactococcus lactis subsp. lactis (strain IL1403) (Streptococcus lactis).